The following is a 255-amino-acid chain: Acid phosphatase 1 (255 aa).

The N-terminal stretch at 1-15 (MRIFVFLVLLTVAIG) is a signal peptide. A glycan (N-linked (GlcNAc...) asparagine) is linked at N142.

Belongs to the APS1/VSP family.

It carries out the reaction a phosphate monoester + H2O = an alcohol + phosphate. The protein is Acid phosphatase 1 (APS1) of Solanum lycopersicum (Tomato).